We begin with the raw amino-acid sequence, 454 residues long: uncharacterized protein (454 aa).

125–132 (GDVGCGKT) provides a ligand contact to ATP.

Belongs to the AFG1 ATPase family.

This is an uncharacterized protein from Schizosaccharomyces pombe (strain 972 / ATCC 24843) (Fission yeast).